We begin with the raw amino-acid sequence, 187 residues long: Elongation factor P (187 aa).

The protein belongs to the elongation factor P family.

It localises to the cytoplasm. It participates in protein biosynthesis; polypeptide chain elongation. Involved in peptide bond synthesis. Stimulates efficient translation and peptide-bond synthesis on native or reconstituted 70S ribosomes in vitro. Probably functions indirectly by altering the affinity of the ribosome for aminoacyl-tRNA, thus increasing their reactivity as acceptors for peptidyl transferase. The protein is Elongation factor P of Zymomonas mobilis subsp. mobilis (strain ATCC 31821 / ZM4 / CP4).